The primary structure comprises 71 residues: uncharacterized protein (71 aa).

The first 19 residues, 1–19 (MFLFPSLLSSFCITLRSIS), serve as a signal peptide directing secretion.

This is an uncharacterized protein from Pasteurella multocida (strain Pm70).